The sequence spans 249 residues: Coproheme decarboxylase (249 aa).

Residues R131, 145–149 (YPMNK), H172, Q185, and S223 contribute to the Fe-coproporphyrin III site. Y145 is an active-site residue.

This sequence belongs to the ChdC family. Type 1 subfamily. It depends on Fe-coproporphyrin III as a cofactor.

The enzyme catalyses Fe-coproporphyrin III + 2 H2O2 + 2 H(+) = heme b + 2 CO2 + 4 H2O. It catalyses the reaction Fe-coproporphyrin III + H2O2 + H(+) = harderoheme III + CO2 + 2 H2O. The catalysed reaction is harderoheme III + H2O2 + H(+) = heme b + CO2 + 2 H2O. It participates in porphyrin-containing compound metabolism; protoheme biosynthesis. Involved in coproporphyrin-dependent heme b biosynthesis. Catalyzes the decarboxylation of Fe-coproporphyrin III (coproheme) to heme b (protoheme IX), the last step of the pathway. The reaction occurs in a stepwise manner with a three-propionate intermediate. The protein is Coproheme decarboxylase of Thermus thermophilus (strain ATCC BAA-163 / DSM 7039 / HB27).